The sequence spans 142 residues: Probable inactive dual specificity protein phosphatase-like At4g18593 (142 aa).

It belongs to the protein-tyrosine phosphatase family. Non-receptor class dual specificity subfamily.

In Arabidopsis thaliana (Mouse-ear cress), this protein is Probable inactive dual specificity protein phosphatase-like At4g18593.